The sequence spans 194 residues: Leucyl/phenylalanyl-tRNA--protein transferase (194 aa).

The protein belongs to the L/F-transferase family.

The protein localises to the cytoplasm. The catalysed reaction is N-terminal L-lysyl-[protein] + L-leucyl-tRNA(Leu) = N-terminal L-leucyl-L-lysyl-[protein] + tRNA(Leu) + H(+). It carries out the reaction N-terminal L-arginyl-[protein] + L-leucyl-tRNA(Leu) = N-terminal L-leucyl-L-arginyl-[protein] + tRNA(Leu) + H(+). It catalyses the reaction L-phenylalanyl-tRNA(Phe) + an N-terminal L-alpha-aminoacyl-[protein] = an N-terminal L-phenylalanyl-L-alpha-aminoacyl-[protein] + tRNA(Phe). Functionally, functions in the N-end rule pathway of protein degradation where it conjugates Leu, Phe and, less efficiently, Met from aminoacyl-tRNAs to the N-termini of proteins containing an N-terminal arginine or lysine. In Chlorobium limicola (strain DSM 245 / NBRC 103803 / 6330), this protein is Leucyl/phenylalanyl-tRNA--protein transferase.